Consider the following 213-residue polypeptide: tRNA (guanine-N(7)-)-methyltransferase (213 aa).

Residues Glu44, Glu69, Asn96, and Asp118 each contribute to the S-adenosyl-L-methionine site. Asp118 is a catalytic residue. Position 122 (Lys122) interacts with substrate. The interval 124 to 129 is interaction with RNA; it reads RHEKRR. Substrate is bound by residues Asp154 and 191 to 194; that span reads TEYE.

The protein belongs to the class I-like SAM-binding methyltransferase superfamily. TrmB family.

The catalysed reaction is guanosine(46) in tRNA + S-adenosyl-L-methionine = N(7)-methylguanosine(46) in tRNA + S-adenosyl-L-homocysteine. Its pathway is tRNA modification; N(7)-methylguanine-tRNA biosynthesis. Functionally, catalyzes the formation of N(7)-methylguanine at position 46 (m7G46) in tRNA. In Bacillus licheniformis (strain ATCC 14580 / DSM 13 / JCM 2505 / CCUG 7422 / NBRC 12200 / NCIMB 9375 / NCTC 10341 / NRRL NRS-1264 / Gibson 46), this protein is tRNA (guanine-N(7)-)-methyltransferase.